Reading from the N-terminus, the 126-residue chain is MRHRLANRKLNRTSSHRLAMLRNLANSLLRHEQIVTTLPKAKELRRVAEPLITLGKKPSLANRRLAFDRTRDREIVVKLFDELGPRFANRNGGYLRILKYGFRQGDNAPMALVELVERPEVEAAAE.

It belongs to the bacterial ribosomal protein bL17 family. In terms of assembly, part of the 50S ribosomal subunit. Contacts protein L32.

In Laribacter hongkongensis (strain HLHK9), this protein is Large ribosomal subunit protein bL17.